A 163-amino-acid chain; its full sequence is MQHYVTPDLCDAYPDLVQVLEPMFSNFGGRDSFGGQIVTIKCFEDNSLVKEQVELDGKGKVLVVDGGGSLRRALLGDMLAEKAAKNGWEGLVIYGCVRDVDVLIQTDVGVQALASHPMKTDKRGIGDLNVVVAFAGVTFRPGEYVYADNNGVLVSPSPLEMPE.

Substrate contacts are provided by residues 76 to 79 (GDML) and R98. D99 contacts a divalent metal cation.

The protein belongs to the class II aldolase/RraA-like family. As to quaternary structure, homotrimer. The cofactor is a divalent metal cation.

It catalyses the reaction 4-hydroxy-4-methyl-2-oxoglutarate = 2 pyruvate. The enzyme catalyses oxaloacetate + H(+) = pyruvate + CO2. In terms of biological role, catalyzes the aldol cleavage of 4-hydroxy-4-methyl-2-oxoglutarate (HMG) into 2 molecules of pyruvate. Also contains a secondary oxaloacetate (OAA) decarboxylase activity due to the common pyruvate enolate transition state formed following C-C bond cleavage in the retro-aldol and decarboxylation reactions. This is Putative 4-hydroxy-4-methyl-2-oxoglutarate aldolase from Pseudomonas putida (strain GB-1).